A 64-amino-acid polypeptide reads, in one-letter code: Alpha-conotoxin-like Ac1.1b (64 aa).

The N-terminal stretch at 1 to 21 (MGMRMMFTLFLLVVLTTTVVS) is a signal peptide. A propeptide spanning residues 22–47 (FPSDSASDGRDDEAKDERSDMYKSKR) is cleaved from the precursor. The segment at 23 to 46 (PSDSASDGRDDEAKDERSDMYKSK) is disordered. Residues 28 to 44 (SDGRDDEAKDERSDMYK) are compositionally biased toward basic and acidic residues. Intrachain disulfides connect Cys-51-Cys-56 and Cys-52-Cys-62. Cysteine amide is present on Cys-62.

It belongs to the conotoxin A superfamily. Expressed by the venom duct.

The protein localises to the secreted. Functionally, alpha-conotoxins act on postsynaptic membranes, they bind to the nicotinic acetylcholine receptors (nAChR) and thus inhibit them. This is Alpha-conotoxin-like Ac1.1b from Conus achatinus (Little frog cone).